We begin with the raw amino-acid sequence, 211 residues long: Ceramide-1-phosphate transfer protein (211 aa).

An N-acylsphingoid base 1-phosphate is bound by residues Asp53, Lys57, Arg103, Arg107, and His147.

It belongs to the GLTP family.

The protein localises to the cytoplasm. Its subcellular location is the cytosol. It is found in the golgi apparatus. It localises to the trans-Golgi network membrane. The protein resides in the cell membrane. The protein localises to the endosome membrane. Its subcellular location is the nucleus outer membrane. It carries out the reaction N-(hexadecanoyl)-sphing-4-enine-1-phosphate(in) = N-(hexadecanoyl)-sphing-4-enine-1-phosphate(out). The catalysed reaction is N-(9Z-octadecenoyl)-sphing-4-enine-1-phosphate(in) = N-(9Z-octadecenoyl)-sphing-4-enine-1-phosphate(out). Mediates the intracellular transfer of ceramide-1-phosphate (C1P) between organelle membranes and the cell membrane. Required for normal structure of the Golgi stacks. Can bind phosphoceramides with a variety of aliphatic chains, but has a preference for lipids with saturated C16:0 or monounsaturated C18:1 aliphatic chains, and is inefficient with phosphoceramides containing lignoceryl (C24:0). Plays a role in the regulation of the cellular levels of ceramide-1-phosphate, and thereby contributes to the regulation of phospholipase PLA2G4A activity and the release of arachidonic acid. Has no activity with galactosylceramide, lactosylceramide, sphingomyelin, phosphatidylcholine, phosphatidic acid and ceramide. C1P transfer is stimulated by phosphatidylserine in C1P source vesicles. Regulates autophagy and pyroptosis, but not apoptosis. This Danio rerio (Zebrafish) protein is Ceramide-1-phosphate transfer protein (cptp).